Consider the following 488-residue polypeptide: Inosine-5'-monophosphate dehydrogenase (488 aa).

CBS domains follow at residues 95 to 153 and 157 to 216; these read VISN…SIKI and MTQE…AKDE. Residues aspartate 250 and 300 to 302 each bind NAD(+); that span reads GIG. K(+) is bound by residues glycine 302 and glycine 304. Serine 305 lines the IMP pocket. Cysteine 307 is a binding site for K(+). Cysteine 307 acts as the Thioimidate intermediate in catalysis. Residues 340–342, 363–364, and 387–391 each bind IMP; these read DGG, GS, and YRGMG. Catalysis depends on arginine 403, which acts as the Proton acceptor. Glutamate 417 is an IMP binding site. The interval 468 to 488 is disordered; that stretch reads GLAESHPHNIQITKESPNYSF. K(+)-binding residues include glutamate 471, serine 472, and histidine 473. Over residues 475–488 the composition is skewed to polar residues; that stretch reads HNIQITKESPNYSF.

This sequence belongs to the IMPDH/GMPR family. In terms of assembly, homotetramer. Requires K(+) as cofactor.

It carries out the reaction IMP + NAD(+) + H2O = XMP + NADH + H(+). It functions in the pathway purine metabolism; XMP biosynthesis via de novo pathway; XMP from IMP: step 1/1. Its activity is regulated as follows. Mycophenolic acid (MPA) is a non-competitive inhibitor that prevents formation of the closed enzyme conformation by binding to the same site as the amobile flap. In contrast, mizoribine monophosphate (MZP) is a competitive inhibitor that induces the closed conformation. MPA is a potent inhibitor of mammalian IMPDHs but a poor inhibitor of the bacterial enzymes. MZP is a more potent inhibitor of bacterial IMPDH. Catalyzes the conversion of inosine 5'-phosphate (IMP) to xanthosine 5'-phosphate (XMP), the first committed and rate-limiting step in the de novo synthesis of guanine nucleotides, and therefore plays an important role in the regulation of cell growth. The sequence is that of Inosine-5'-monophosphate dehydrogenase from Staphylococcus aureus (strain MW2).